A 174-amino-acid polypeptide reads, in one-letter code: Myosin regulatory light chain sqh (174 aa).

Residue Thr-21 is modified to Phosphothreonine. Position 22 is a phosphoserine (Ser-22). EF-hand domains lie at 31–66 (AQIA…LGKN) and 100–135 (DPED…MGDR). 4 residues coordinate Ca(2+): Asp-44, Asn-46, Asp-48, and Asp-55.

In terms of assembly, myosin is a hexamer of 2 heavy chains and 4 light chains. Post-translationally, phosphorylation plays a central role in myosin regulation.

In terms of biological role, required for cytokinesis, could regulate contractile ring function. This is Myosin regulatory light chain sqh (sqh) from Drosophila melanogaster (Fruit fly).